The following is an 89-amino-acid chain: Signal recognition particle 19 kDa protein (89 aa).

It belongs to the SRP19 family. Part of the signal recognition particle protein translocation system, which is composed of SRP and FtsY. Archaeal SRP consists of a 7S RNA molecule of 300 nucleotides and two protein subunits: SRP54 and SRP19.

The protein resides in the cytoplasm. Functionally, involved in targeting and insertion of nascent membrane proteins into the cytoplasmic membrane. Binds directly to 7S RNA and mediates binding of the 54 kDa subunit of the SRP. The chain is Signal recognition particle 19 kDa protein from Methanobrevibacter smithii (strain ATCC 35061 / DSM 861 / OCM 144 / PS).